Reading from the N-terminus, the 262-residue chain is Homeobox protein vent1 (262 aa).

Basic and acidic residues-rich tracts occupy residues R16–V26 and Y44–Q55. The interval R16–R129 is disordered. Residues G58–S79 show a composition bias toward polar residues. The segment covering D114–R128 has biased composition (basic and acidic residues). The segment at residues Q127–I186 is a DNA-binding region (homeobox).

Its subcellular location is the nucleus. Transcriptional repressor. Cooperates with vent2 in a ventral signaling pathway downstream of bmp4, which antagonizes the Spemann organizer and dorsal mesoderm formation, and leads to ventral mesoderm formation. Acts downstream of bmp4 to repress transcription of foxa4-B/XFD-1'. Binds to DNA with preference for the target sequence 5'-CTATT[T/C]G-3'. Also binds 5'-TGCATTTTG-3' at a lower frequency, and occasionally 5'-TTGATC-3'. Binds to the homeobox 2 (HBX2) repressor element in the promoter of the myf5 gene. Cooperates with vent2 to repress myf5 expression in the ventral domain. In Xenopus tropicalis (Western clawed frog), this protein is Homeobox protein vent1.